The chain runs to 550 residues: Transcription factor 7-like 1-C (550 aa).

Residues 1 to 11 (MPQLNSGGGDE) are compositionally biased toward gly residues. Positions 1 to 60 (MPQLNSGGGDELGANDELIRFKDEGEQEEKSPGEGSAEDLADVKSSLVNESENHSSDSDS) are interaction with CTNNB1-A. Disordered stretches follow at residues 1–76 (MPQL…EKPR), 182–206 (GTPP…HPSE), and 390–473 (WSAR…SLTT). Basic and acidic residues-rich tracts occupy residues 17-32 (ELIR…EKSP) and 51-76 (SENH…EKPR). Residues 108–311 (LGGITCPMVP…SPNLSRKSNV (204 aa)) form an interaction with AES and TLE4-A region. The HMG box DNA-binding region spans 323-391 (IKKPLNAFML…LHSQLYPSWS (69 aa)). Positions 406–415 (KQSPEMENYT) are enriched in basic and acidic residues. The tract at residues 407–550 (QSPEMENYTK…PLSLVTRSSD (144 aa)) is interaction with CTBP-B. Residues 444–463 (SPATPSAALASPAAPAATHS) show a composition bias toward low complexity. Positions 464–473 (EQAQPLSLTT) are enriched in polar residues.

Belongs to the TCF/LEF family. As to quaternary structure, interacts with csnk1e, ctnnb1-A, ctbp-B, dact1-A and gsk3b. May interact with ase and tle4-A. Phosphorylated. Phosphorylation by csnk1e promotes binding to ctnnb1-A while phosphorylation by gsk3b may reverse this effect.

Its subcellular location is the nucleus. Its function is as follows. Participates in the Wnt signaling pathway. Binds to DNA and acts as a repressor in the absence of ctnnb1-A and possibly ctnnb1-B, and as an activator in the presence of these proteins. Required early in development for the establishment of the dorsal body axis in response to maternal Wnt signaling. This is Transcription factor 7-like 1-C (tcf7l1-c) from Xenopus laevis (African clawed frog).